The sequence spans 307 residues: tRNA dimethylallyltransferase 1 (307 aa).

10 to 17 (GPTASGKT) contributes to the ATP binding site. 12–17 (TASGKT) is a binding site for substrate. Residues 35-38 (DSRQ) form an interaction with substrate tRNA region.

The protein belongs to the IPP transferase family. Monomer. The cofactor is Mg(2+).

The catalysed reaction is adenosine(37) in tRNA + dimethylallyl diphosphate = N(6)-dimethylallyladenosine(37) in tRNA + diphosphate. Catalyzes the transfer of a dimethylallyl group onto the adenine at position 37 in tRNAs that read codons beginning with uridine, leading to the formation of N6-(dimethylallyl)adenosine (i(6)A). This is tRNA dimethylallyltransferase 1 from Geotalea daltonii (strain DSM 22248 / JCM 15807 / FRC-32) (Geobacter daltonii).